The primary structure comprises 431 residues: RNA-binding motif, single-stranded-interacting protein 3 (431 aa).

Positions 28 to 53 (YAPAPHPMAPPSPSTNSSSNSSGEQL) are disordered. A compositionally biased stretch (pro residues) spans 31-40 (APHPMAPPSP). RRM domains follow at residues 56 to 129 (TNLY…MAKQ) and 135 to 220 (TNLY…FADG). Disordered regions lie at residues 220-242 (GGQK…PREG) and 393-431 (TSPQ…QSKP). Low complexity predominate over residues 401 to 411 (SSQDSSGQQQQ).

Its subcellular location is the cytoplasm. Functionally, binds poly(A) and poly(U) oligoribonucleotides. In Mus musculus (Mouse), this protein is RNA-binding motif, single-stranded-interacting protein 3 (Rbms3).